Here is a 264-residue protein sequence, read N- to C-terminus: S-adenosylmethionine decarboxylase proenzyme (264 aa).

The active-site Schiff-base intermediate with substrate; via pyruvic acid is the serine 112. Pyruvic acid (Ser); by autocatalysis is present on serine 112. Histidine 117 functions as the Proton acceptor; for processing activity in the catalytic mechanism. Cysteine 140 acts as the Proton donor; for catalytic activity in catalysis.

This sequence belongs to the prokaryotic AdoMetDC family. Type 2 subfamily. In terms of assembly, heterooctamer of four alpha and four beta chains arranged as a tetramer of alpha/beta heterodimers. The cofactor is pyruvate. Is synthesized initially as an inactive proenzyme. Formation of the active enzyme involves a self-maturation process in which the active site pyruvoyl group is generated from an internal serine residue via an autocatalytic post-translational modification. Two non-identical subunits are generated from the proenzyme in this reaction, and the pyruvate is formed at the N-terminus of the alpha chain, which is derived from the carboxyl end of the proenzyme. The post-translation cleavage follows an unusual pathway, termed non-hydrolytic serinolysis, in which the side chain hydroxyl group of the serine supplies its oxygen atom to form the C-terminus of the beta chain, while the remainder of the serine residue undergoes an oxidative deamination to produce ammonia and the pyruvoyl group blocking the N-terminus of the alpha chain.

The catalysed reaction is S-adenosyl-L-methionine + H(+) = S-adenosyl 3-(methylsulfanyl)propylamine + CO2. It functions in the pathway amine and polyamine biosynthesis; S-adenosylmethioninamine biosynthesis; S-adenosylmethioninamine from S-adenosyl-L-methionine: step 1/1. Functionally, catalyzes the decarboxylation of S-adenosylmethionine to S-adenosylmethioninamine (dcAdoMet), the propylamine donor required for the synthesis of the polyamines spermine and spermidine from the diamine putrescine. The polypeptide is S-adenosylmethionine decarboxylase proenzyme (Salmonella agona (strain SL483)).